A 237-amino-acid chain; its full sequence is MTPQDFYRTLEEDGFSLSSKQKEQFDTYFKLLVEWNTKINLTAITEENEVYLKHFYDSIAPILQGFLANEPIKLLDIGAGAGFPSLPMKILFPNLEVTIIDSLNKRISFLTLLAQELGLENVHFFHGRAEDFGQDKAFRGQFDVVTARAVARMQVLSELTIPFLKIGGKLIALKAQAADQELEEAKNALCLLFGKVIKNHSYQLPNGDSRFITIVEKKKETPNKYPRKAGLPNKKPL.

S-adenosyl-L-methionine-binding positions include Gly-78, Phe-83, 129–130 (AE), and Arg-148.

Belongs to the methyltransferase superfamily. RNA methyltransferase RsmG family.

Its subcellular location is the cytoplasm. In terms of biological role, specifically methylates the N7 position of a guanine in 16S rRNA. The protein is Ribosomal RNA small subunit methyltransferase G of Streptococcus pyogenes serotype M3 (strain ATCC BAA-595 / MGAS315).